Reading from the N-terminus, the 515-residue chain is N-fatty-acyl-amino acid synthase/hydrolase PM20D1.1 (515 aa).

The first 34 residues, 1 to 34 (MKTKFTKKTVLKFFGILFAILLLSVLILFSVVIG), serve as a signal peptide directing secretion. N-linked (GlcNAc...) asparagine glycosylation is found at asparagine 50, asparagine 87, and asparagine 118. Residue histidine 140 coordinates Zn(2+). Aspartate 142 is a catalytic residue. Aspartate 173 contacts Zn(2+). The active-site Proton acceptor is the glutamate 207. Residues glutamate 208, aspartate 234, and histidine 480 each contribute to the Zn(2+) site.

This sequence belongs to the peptidase M20A family. Requires Zn(2+) as cofactor.

Its subcellular location is the secreted. The catalysed reaction is an N-acyl-L-amino acid + H2O = an L-alpha-amino acid + a carboxylate. It carries out the reaction an N-acyl-aromatic L-alpha-amino acid + H2O = an aromatic L-alpha-amino acid + a carboxylate. It catalyses the reaction N-(5Z,8Z,11Z,14Z)-eicosatetraenoyl-glycine + H2O = (5Z,8Z,11Z,14Z)-eicosatetraenoate + glycine. The enzyme catalyses N-hexadecanoyl-L-phenylalanine + H2O = hexadecanoate + L-phenylalanine. The catalysed reaction is N-octadecanoyl-L-phenylalanine + H2O = octadecanoate + L-phenylalanine. It carries out the reaction N-(4Z,7Z,10Z,13Z,16Z,19Z-docosahexaenoyl)-L-phenylalanine + H2O = (4Z,7Z,10Z,13Z,16Z,19Z)-docosahexaenoate + L-phenylalanine. It catalyses the reaction N-(9Z-octadecenoyl)-L-asparagine + H2O = L-asparagine + (9Z)-octadecenoate. The enzyme catalyses (9Z)-octadecenoate + glycine = N-(9Z-octadecenoyl)glycine + H2O. The catalysed reaction is N-(9Z-octadecenoyl)-L-lysine + H2O = L-lysine + (9Z)-octadecenoate. It carries out the reaction N-(9Z-octadecenoyl)-L-methionine + H2O = (9Z)-octadecenoate + L-methionine. It catalyses the reaction N-(9Z-octadecenoyl)-L-serine + H2O = L-serine + (9Z)-octadecenoate. The enzyme catalyses N-(9Z-octadecenoyl)-L-tryptophan + H2O = L-tryptophan + (9Z)-octadecenoate. The catalysed reaction is N-(9Z-octadecenoyl)-L-tyrosine + H2O = L-tyrosine + (9Z)-octadecenoate. It carries out the reaction N-(9Z-octadecenoyl)-L-glutamine + H2O = L-glutamine + (9Z)-octadecenoate. It catalyses the reaction N-(5Z,8Z,11Z,14Z-eicosatetraenoyl)-L-serine + H2O = (5Z,8Z,11Z,14Z)-eicosatetraenoate + L-serine. The enzyme catalyses (5Z,8Z,11Z,14Z)-eicosatetraenoate + L-phenylalanine = N-(5Z,8Z,11Z,14Z-eicosatetraenoyl)-L-phenylalanine + H2O. The catalysed reaction is N-(9Z-octadecenoyl)-L-leucine + H2O = L-leucine + (9Z)-octadecenoate. It carries out the reaction L-phenylalanine + (9Z)-octadecenoate = N-(9Z-octadecenoyl)-L-phenylalanine + H2O. It functions in the pathway amino-acid metabolism. The protein operates within energy metabolism; electron transfer. Its pathway is lipid metabolism; fatty acid metabolism. With respect to regulation, lipoproteins are powerful coactivators of PM20D1 activity in vitro and NAA biosynthesis in vivo. Secreted enzyme that regulates the endogenous N-fatty acyl amino acid (NAAs) tissue and circulating levels by functioning as a bidirectional NAA synthase/hydrolase. It condenses free fatty acids and free amino acids to generate NAAs and bidirectionally catalyzes the reverse hydrolysis reaction. Some of these NAAs stimulate oxidative metabolism via mitochondrial uncoupling, increasing energy expenditure in a UPC1-independent manner. Thereby, this secreted protein may indirectly regulate whole body energy expenditure. PM20D1 circulates in tight association with both low- and high-density (LDL and HDL,respectively) lipoprotein particles. This Danio rerio (Zebrafish) protein is N-fatty-acyl-amino acid synthase/hydrolase PM20D1.1.